We begin with the raw amino-acid sequence, 29 residues long: Cytochrome b6-f complex subunit 8 (29 aa).

The chain crosses the membrane as a helical span at residues 3 to 23 (TVSIAWAALMVIFTFSISLVV).

This sequence belongs to the PetN family. As to quaternary structure, the 4 large subunits of the cytochrome b6-f complex are cytochrome b6, subunit IV (17 kDa polypeptide, PetD), cytochrome f and the Rieske protein, while the 4 small subunits are PetG, PetL, PetM and PetN. The complex functions as a dimer.

The protein localises to the plastid. It localises to the chloroplast thylakoid membrane. Functionally, component of the cytochrome b6-f complex, which mediates electron transfer between photosystem II (PSII) and photosystem I (PSI), cyclic electron flow around PSI, and state transitions. The chain is Cytochrome b6-f complex subunit 8 from Psilotum nudum (Whisk fern).